Here is a 202-residue protein sequence, read N- to C-terminus: Pycsar effector protein PtPycTM (202 aa).

Transmembrane regions (helical) follow at residues 60 to 80 (GVVL…AADI), 85 to 105 (LVIL…AVLA), and 181 to 201 (ILVG…VALG).

It localises to the cell membrane. In terms of biological role, pycsar (pyrimidine cyclase system for antiphage resistance) provides immunity against bacteriophage. The pyrimidine cyclase (PycC) synthesizes cyclic nucleotides in response to infection; these serve as specific second messenger signals. The signals activate the adjacent effector, leading to bacterial cell death and abortive phage infection. A clade D Pycsar system. Functionally, the effector gene of a two-gene Pycsar system. Expression of this and adjacent uridylate cyclase PtPycC (AC A0A4V2JTK3) probably confers resistance to bacteriophage. The genes are probably only expressed in response to bacteriophage infection. Probably only responds to cUMP (produced by its cognate NTP cyclase), acts by impairing membrane integrity. The chain is Pycsar effector protein PtPycTM from Propioniciclava tarda.